The primary structure comprises 422 residues: Sphingomyelin phosphodiesterase 2 (422 aa).

E49 is a binding site for Mg(2+). The Proton acceptor role is filled by H272. The next 2 helical transmembrane spans lie at 325-345 (ALFG…CVLA) and 354-374 (AIML…VYLF). The tract at residues 397-422 (TETQDLGSEPHPTHCRQQEADRAEEK) is disordered. Residues 412-422 (RQQEADRAEEK) show a composition bias toward basic and acidic residues.

The protein belongs to the neutral sphingomyelinase family. Requires Mg(2+) as cofactor.

Its subcellular location is the membrane. The catalysed reaction is a sphingomyelin + H2O = phosphocholine + an N-acylsphing-4-enine + H(+). The enzyme catalyses 1-O-octadecyl-sn-glycero-3-phosphocholine + H2O = 1-O-octadecyl-sn-glycerol + phosphocholine + H(+). It carries out the reaction an N-(acyl)-sphingosylphosphocholine + H2O = an N-acyl-sphingoid base + phosphocholine + H(+). It catalyses the reaction 1-hexadecanoyl-sn-glycero-3-phosphocholine + H2O = 1-hexadecanoyl-sn-glycerol + phosphocholine + H(+). The catalysed reaction is a sphingosylphosphocholine + H2O = a sphingoid base + phosphocholine + H(+). The enzyme catalyses 1-O-hexadecyl-sn-glycero-3-phosphocholine + H2O = 1-O-hexadecyl-sn-glycerol + phosphocholine + H(+). It participates in lipid metabolism; sphingolipid metabolism. In terms of biological role, catalyzes the hydrolysis of sphingomyelin to form ceramide and phosphocholine. Ceramide mediates numerous cellular functions, such as apoptosis and growth arrest, and is capable of regulating these 2 cellular events independently. Also hydrolyzes sphingosylphosphocholine. Hydrolyze 1-acyl-2-lyso-sn-glycero-3-phosphocholine (lyso-PC) and 1-O-alkyl-2-lyso-sn-glycero-3-phosphocholine (lyso-platelet-activating factor). This is Sphingomyelin phosphodiesterase 2 (Smpd2) from Rattus norvegicus (Rat).